The sequence spans 208 residues: Dephospho-CoA kinase (208 aa).

The DPCK domain maps to leucine 8–glutamate 208. Glycine 16–threonine 21 contacts ATP.

The protein belongs to the CoaE family.

The protein localises to the cytoplasm. It carries out the reaction 3'-dephospho-CoA + ATP = ADP + CoA + H(+). It participates in cofactor biosynthesis; coenzyme A biosynthesis; CoA from (R)-pantothenate: step 5/5. Its function is as follows. Catalyzes the phosphorylation of the 3'-hydroxyl group of dephosphocoenzyme A to form coenzyme A. In Chlorobaculum tepidum (strain ATCC 49652 / DSM 12025 / NBRC 103806 / TLS) (Chlorobium tepidum), this protein is Dephospho-CoA kinase.